A 400-amino-acid polypeptide reads, in one-letter code: Formate-dependent phosphoribosylglycinamide formyltransferase (400 aa).

N(1)-(5-phospho-beta-D-ribosyl)glycinamide is bound by residues 22-23 and E82; that span reads EL. ATP is bound by residues R115, K157, 162–167, 197–200, and E205; these read SSGKGQ and EGFV. The ATP-grasp domain occupies 120 to 315; sequence RLAAETLGLP…EFELHARAIL (196 aa). The Mg(2+) site is built by E274 and E286. N(1)-(5-phospho-beta-D-ribosyl)glycinamide contacts are provided by residues D293, K362, and 369–370; that span reads RR.

This sequence belongs to the PurK/PurT family. Homodimer.

It catalyses the reaction N(1)-(5-phospho-beta-D-ribosyl)glycinamide + formate + ATP = N(2)-formyl-N(1)-(5-phospho-beta-D-ribosyl)glycinamide + ADP + phosphate + H(+). It functions in the pathway purine metabolism; IMP biosynthesis via de novo pathway; N(2)-formyl-N(1)-(5-phospho-D-ribosyl)glycinamide from N(1)-(5-phospho-D-ribosyl)glycinamide (formate route): step 1/1. Involved in the de novo purine biosynthesis. Catalyzes the transfer of formate to 5-phospho-ribosyl-glycinamide (GAR), producing 5-phospho-ribosyl-N-formylglycinamide (FGAR). Formate is provided by PurU via hydrolysis of 10-formyl-tetrahydrofolate. This chain is Formate-dependent phosphoribosylglycinamide formyltransferase, found in Mycolicibacterium gilvum (strain PYR-GCK) (Mycobacterium gilvum (strain PYR-GCK)).